Consider the following 418-residue polypeptide: Phospho-N-acetylmuramoyl-pentapeptide-transferase (418 aa).

10 helical membrane passes run 22–42 (YISF…VLIG), 72–92 (TPTM…LLLA), 95–115 (SNIY…LGLI), 135–155 (IIAQ…SPNI), 208–228 (AATW…VSNG), 244–264 (AIIG…GFAA), 277–297 (LTVF…HNAF), 302–322 (FMGD…AIII), 326–346 (LLLP…MIQV), and 395–415 (KIVV…VVTL).

This sequence belongs to the glycosyltransferase 4 family. MraY subfamily. Requires Mg(2+) as cofactor.

The protein localises to the cell inner membrane. The catalysed reaction is UDP-N-acetyl-alpha-D-muramoyl-L-alanyl-gamma-D-glutamyl-meso-2,6-diaminopimeloyl-D-alanyl-D-alanine + di-trans,octa-cis-undecaprenyl phosphate = di-trans,octa-cis-undecaprenyl diphospho-N-acetyl-alpha-D-muramoyl-L-alanyl-D-glutamyl-meso-2,6-diaminopimeloyl-D-alanyl-D-alanine + UMP. The protein operates within cell wall biogenesis; peptidoglycan biosynthesis. Its function is as follows. Catalyzes the initial step of the lipid cycle reactions in the biosynthesis of the cell wall peptidoglycan: transfers peptidoglycan precursor phospho-MurNAc-pentapeptide from UDP-MurNAc-pentapeptide onto the lipid carrier undecaprenyl phosphate, yielding undecaprenyl-pyrophosphoryl-MurNAc-pentapeptide, known as lipid I. The polypeptide is Phospho-N-acetylmuramoyl-pentapeptide-transferase (Azobacteroides pseudotrichonymphae genomovar. CFP2).